The chain runs to 450 residues: MEEPQKSYVNTMDLERDEPLKSTGPQISVSEFSCHCCYDILVNPTTLNCGHSFCRHCLALWWASSKKTECPECREKWEGFPKVSILLRDAIEKLFPDAIRLRFEDIQQNNDIVQSLAAFQKYGNDQIPLAPNTGRANQQMGGGFFSGVLTALTGVAVVLLVYHWSSRESEHDLLVHKAVAKWTAEEVVLWLEQLGPWASLYRERFLSERVNGRLLLTLTEEEFSKTPYTIENSSHRRAILMELERVKALGVKPPQNLWEYKAVNPGRSLFLLYALKSSPRLSLLYLYLFDYTDTFLPFIHTICPLQEDSSGEDIVTKLLDLKEPTWKQWREFLVKYSFLPYQLIAEFAWDWLEVHYWTSRFLIINAMLLSVLELFSFWRIWSRSELKTVPQRMWSHFWKVSTQGLFVAMFWPLIPQFVCNCLFYWALYFNPIINIDLVVKELRRLETQVL.

The disordered stretch occupies residues Met-1–Leu-20. Over Met-1–Met-140 the chain is Cytoplasmic. The RING-type zinc-finger motif lies at Cys-34–Arg-74. A helical membrane pass occupies residues Gly-141–Val-161. The Lumenal portion of the chain corresponds to Tyr-162–Glu-331. Residues Trp-182–Leu-249 form the SAM domain. The N-linked (GlcNAc...) asparagine glycan is linked to Asn-232. A helical membrane pass occupies residues Phe-332–Leu-352. Residues Glu-353–Arg-360 lie on the Cytoplasmic side of the membrane. Residues Phe-361–Trp-381 form a helical membrane-spanning segment. The Lumenal segment spans residues Ser-382–Gly-404. The helical transmembrane segment at Leu-405–Trp-425 threads the bilayer. The Cytoplasmic portion of the chain corresponds to Ala-426–Leu-450.

As to quaternary structure, interacts with CASP8, BCL2 and BCL2L1 through SAM domain and also with HIP1, IFT57, ESRRBL1 and BCAP31. Interacts with NGFR; this interaction inhibits NF-kappa-B and JNK-related signaling pathways. In terms of processing, mediates RING-dependent self-ubiquitination leading to proteasomal degradation. Expressed highly in brain, moderately in small intestine, weakly in testes and only faintly in liver and skeletal muscle. Not expressed in heart, kidney, lung and spleen.

It is found in the endoplasmic reticulum membrane. The enzyme catalyses S-ubiquitinyl-[E2 ubiquitin-conjugating enzyme]-L-cysteine + [acceptor protein]-L-lysine = [E2 ubiquitin-conjugating enzyme]-L-cysteine + N(6)-ubiquitinyl-[acceptor protein]-L-lysine.. Its function is as follows. Membrane-bound E3 ubiquitin ligase that plays a role in several processes including apoptosis regulation or reticulum endoplasmic stress. Has anti-apoptotic activity, both for apoptosis triggered via death-receptors and via mitochondrial factors. Contributes to the dynamic control of IRE1/ERN1 signaling during ER stress by inducing BAX inhibitor 1/TMBIM6 proteasomal degradation. Promotes the activation of TGF-beta signaling by mediating the 'Lys-63'-linked ubiquitination of TGFBR1 which is critical to activate the pathway. Together with NGFR, negatively regulates NF-kappa-B and JNK-related signaling pathways. Promotes the proteasome-mediated degradation of PNPLA3, a protein involveld in lipid metabolism. The chain is Bifunctional apoptosis regulator (BFAR) from Homo sapiens (Human).